A 120-amino-acid chain; its full sequence is MISKIDKNKVRLKRHARVRSNLSGTAQKPRLNVYRSNKHIYAQIIDDTKGVTLVQASTQDKDFENETGSKVELSSKVGEAIAKKAADKGITEIVFDRGGYLYHGRVKALADAARENGLQF.

Belongs to the universal ribosomal protein uL18 family. As to quaternary structure, part of the 50S ribosomal subunit; part of the 5S rRNA/L5/L18/L25 subcomplex. Contacts the 5S and 23S rRNAs.

Its function is as follows. This is one of the proteins that bind and probably mediate the attachment of the 5S RNA into the large ribosomal subunit, where it forms part of the central protuberance. This chain is Large ribosomal subunit protein uL18, found in Staphylococcus carnosus (strain TM300).